The chain runs to 143 residues: Transcriptional regulator MraZ (143 aa).

SpoVT-AbrB domains follow at residues 5-47 (EYQH…PQEE) and 76-119 (ASEC…SKSE).

This sequence belongs to the MraZ family. In terms of assembly, forms oligomers.

It is found in the cytoplasm. Its subcellular location is the nucleoid. The protein is Transcriptional regulator MraZ of Listeria welshimeri serovar 6b (strain ATCC 35897 / DSM 20650 / CCUG 15529 / CIP 8149 / NCTC 11857 / SLCC 5334 / V8).